The sequence spans 124 residues: WAP four-disulfide core domain protein 2 (124 aa).

The first 27 residues, 1–27 (MPACRPGPLAGALLLGLLLLGLPRVPG), serve as a signal peptide directing secretion. WAP domains follow at residues 29–73 (EVEK…CHLP) and 74–123 (NEKE…VTPI). Cystine bridges form between Cys36–Cys62, Cys45–Cys66, Cys49–Cys61, Cys55–Cys70, Cys80–Cys110, Cys93–Cys114, Cys97–Cys109, and Cys103–Cys119. N-linked (GlcNAc...) asparagine glycosylation is present at Asn44.

As to quaternary structure, homotrimer; disulfide-linked. As to expression, epididymis. Highest levels are found in the caput and proximal cauda regions. Lower levels in the distal cauda. Not detected in the efferent ducts.

It is found in the secreted. In terms of biological role, broad range protease inhibitor. Possible function in sperm maturation. This is WAP four-disulfide core domain protein 2 (WFDC2) from Canis lupus familiaris (Dog).